Consider the following 383-residue polypeptide: Geranylgeranyl pyrophosphate synthase esdpD (383 aa).

Isopentenyl diphosphate contacts are provided by lysine 88, arginine 91, and histidine 120. The Mg(2+) site is built by aspartate 150 and aspartate 154. Arginine 159 contacts dimethylallyl diphosphate. An isopentenyl diphosphate-binding site is contributed by arginine 160. Dimethylallyl diphosphate is bound by residues lysine 237, threonine 238, and glutamine 271. Aspartate 274 provides a ligand contact to Mg(2+). The dimethylallyl diphosphate site is built by asparagine 278, lysine 288, and lysine 298.

Belongs to the FPP/GGPP synthase family. Mg(2+) is required as a cofactor.

The enzyme catalyses isopentenyl diphosphate + dimethylallyl diphosphate = (2E)-geranyl diphosphate + diphosphate. It carries out the reaction isopentenyl diphosphate + (2E)-geranyl diphosphate = (2E,6E)-farnesyl diphosphate + diphosphate. The catalysed reaction is isopentenyl diphosphate + (2E,6E)-farnesyl diphosphate = (2E,6E,10E)-geranylgeranyl diphosphate + diphosphate. Its pathway is secondary metabolite biosynthesis; terpenoid biosynthesis. Geranylgeranyl pyrophosphate synthase; part of the cluster that mediates the biosynthesis of shearones, diterpenoid pyrones (DPs) which are structurally diverse meroterpenoids consisting of a diterpene linked by a pyrone, and which may exhibit a range of bioactivities. Within the pathway, esdpD takes part to the biosynthesis of the molecular scaffold by providing geranylgeranyl pyrophosphate (GGPP) to the prenyltransferase esdpC for C-3 geranylgeranylation of the alpha-pyrone. The molecular scaffold is commonly biosynthesized by a series of enzymes including the non-reducing polyketide synthase (NR-PKS) esdpA that generates an alpha-pyrone; the prenyltransferase esdpC that attaches a geranylgeranyl pyrophosphate (GGPP) produced by the GGPP synthase (GGPPS) esdpD onto the pyrone unit; the FAD-dependent monooxygenase esdpE that converts an olefin on the diterpene unit into an epoxide; and the terpene cyclase esdpB that catalyzes the cyclization reactions to give the molecular backbone shearone A. In the modification steps, esdpF oxidizes the hydroxy group to a ketone at C-3 and esdpG then attaches hydroxy groups at both C-11 and C-12. After that, esdpI hydroxylates at C-20 and esdpH hydroxylates at C-6'. The ether bridge is generated by nucleophilic attack of the hydroxy group at C-20 to the carbonyl carbon at C-3. EsdpH can also functions prior to esdpI. The different combinations of these modification enzymes lead to the production of diverse shearone derivatives, shearone I being the end product of the pathway. The alpha-ketoglutarate-dependent dioxygenase esdpJ seems not to be involved in this pathway. This is Geranylgeranyl pyrophosphate synthase esdpD from Penicillium shearii (Eupenicillium shearii).